The sequence spans 417 residues: MFSRDLTIAKYDADLFAAMEQEAQRQEEHIELIASENYTSPAVMEAQGSVLTNKYAEGYPGKRYYGGCEYVDVVEQLAIDRAKELFGADYANVQPHAGSQANAAVYLALLSAGDTILGMSLAHGGHLTHGASVSSSGKLYNAIQYGIDANGLIDYDEVERLAVEHKPKMIVAGFSAYSQILDFPRFRAIADKVGAYLFVDMAHVAGLVAAGVYPNPVPFADVVTTTTHKTLRGPRGGLILAKANADIEKKLNSAVFPGAQGGPLEHVIAAKAICFKEALQPEFKAYQQQVVKNAQAMAGVFIERGFDVVSGGTENHLFLLSLIKQEISGKDADAALGKAFITVNKNSVPNDPRSPFVTSGLRFGTPAVTTRGFKEAECKELAGWICDILADLNNEAVIDAVREKVKAICKKLPVYGA.

Residues Leu121 and Gly125–Leu127 each bind (6S)-5,6,7,8-tetrahydrofolate. Lys229 bears the N6-(pyridoxal phosphate)lysine mark. Ser354–Phe356 provides a ligand contact to (6S)-5,6,7,8-tetrahydrofolate.

Belongs to the SHMT family. In terms of assembly, homodimer. The cofactor is pyridoxal 5'-phosphate.

The protein localises to the cytoplasm. The catalysed reaction is (6R)-5,10-methylene-5,6,7,8-tetrahydrofolate + glycine + H2O = (6S)-5,6,7,8-tetrahydrofolate + L-serine. It functions in the pathway one-carbon metabolism; tetrahydrofolate interconversion. It participates in amino-acid biosynthesis; glycine biosynthesis; glycine from L-serine: step 1/1. In terms of biological role, catalyzes the reversible interconversion of serine and glycine with tetrahydrofolate (THF) serving as the one-carbon carrier. This reaction serves as the major source of one-carbon groups required for the biosynthesis of purines, thymidylate, methionine, and other important biomolecules. Also exhibits THF-independent aldolase activity toward beta-hydroxyamino acids, producing glycine and aldehydes, via a retro-aldol mechanism. In Pseudomonas fluorescens (strain Pf0-1), this protein is Serine hydroxymethyltransferase 2.